Here is a 119-residue protein sequence, read N- to C-terminus: Methylglyoxal synthase (119 aa).

The MGS-like domain maps to 1 to 119 (MRIALIAHDK…GTADLIIKQF (119 aa)). Substrate is bound by residues His-8, Lys-12, 34-37 (TGTT), and 54-55 (SG). Catalysis depends on Asp-60, which acts as the Proton donor/acceptor. His-87 is a binding site for substrate.

It belongs to the methylglyoxal synthase family.

The enzyme catalyses dihydroxyacetone phosphate = methylglyoxal + phosphate. Its function is as follows. Catalyzes the formation of methylglyoxal from dihydroxyacetone phosphate. This is Methylglyoxal synthase from Clostridium botulinum (strain Eklund 17B / Type B).